The following is a 60-amino-acid chain: UPF0509 protein Ent638_2183 (60 aa).

This sequence belongs to the UPF0509 family.

The sequence is that of UPF0509 protein Ent638_2183 from Enterobacter sp. (strain 638).